Consider the following 237-residue polypeptide: Orotidine 5'-phosphate decarboxylase (237 aa).

Substrate-binding positions include Asp10, Lys32, 59–68, Thr118, Arg180, Gln189, Gly209, and Arg210; that span reads DLKLHDIPNT. Lys61 acts as the Proton donor in catalysis.

It belongs to the OMP decarboxylase family. Type 1 subfamily. Homodimer.

The catalysed reaction is orotidine 5'-phosphate + H(+) = UMP + CO2. The protein operates within pyrimidine metabolism; UMP biosynthesis via de novo pathway; UMP from orotate: step 2/2. Its function is as follows. Catalyzes the decarboxylation of orotidine 5'-monophosphate (OMP) to uridine 5'-monophosphate (UMP). This is Orotidine 5'-phosphate decarboxylase from Fusobacterium nucleatum subsp. nucleatum (strain ATCC 25586 / DSM 15643 / BCRC 10681 / CIP 101130 / JCM 8532 / KCTC 2640 / LMG 13131 / VPI 4355).